Consider the following 136-residue polypeptide: Histone H3, embryonic (136 aa).

The interval 1-43 (MARTKQTARKSTGGKAPRKQLATKAARKSAPATGGVKKPHRYR) is disordered. At lysine 5 the chain carries N6-methylated lysine. N6-acetyllysine; alternate is present on lysine 10. Lysine 10 bears the N6-methylated lysine; alternate mark. The residue at position 11 (serine 11) is a Phosphoserine. Residues lysine 15 and lysine 24 each carry the N6-acetyllysine modification. An N6-methylated lysine mark is found at lysine 28, lysine 37, and lysine 80.

Belongs to the histone H3 family. As to quaternary structure, the nucleosome is a histone octamer containing two molecules each of H2A, H2B, H3 and H4 assembled in one H3-H4 heterotetramer and two H2A-H2B heterodimers. The octamer wraps approximately 147 bp of DNA. Post-translationally, acetylation is generally linked to gene activation. Methylation at Lys-5 is linked to gene activation. Methylation at Lys-10 is linked to gene repression.

It localises to the nucleus. It is found in the chromosome. Its function is as follows. Core component of nucleosome. Nucleosomes wrap and compact DNA into chromatin, limiting DNA accessibility to the cellular machineries which require DNA as a template. Histones thereby play a central role in transcription regulation, DNA repair, DNA replication and chromosomal stability. DNA accessibility is regulated via a complex set of post-translational modifications of histones, also called histone code, and nucleosome remodeling. The polypeptide is Histone H3, embryonic (Strongylocentrotus purpuratus (Purple sea urchin)).